Reading from the N-terminus, the 328-residue chain is P2Y purinoceptor 3 (328 aa).

Residues 1–22 are Extracellular-facing; it reads MSMANFTGGRNSCTFHEEFKQV. A glycan (N-linked (GlcNAc...) asparagine) is linked at asparagine 5. Residues 23-43 traverse the membrane as a helical segment; that stretch reads LLPLVYSVVFLLGLPLNAVVI. The Cytoplasmic portion of the chain corresponds to 44–57; it reads GQIWLARKALTRTT. A helical membrane pass occupies residues 58-78; the sequence is IYMLNLAMADLLYVCSLPLLI. The Extracellular portion of the chain corresponds to 79 to 96; the sequence is YNYTQKDYWPFGDFTCKF. Cysteines 94 and 172 form a disulfide. The chain crosses the membrane as a helical span at residues 97–117; that stretch reads VRFQFYTNLHGSILFLTCISV. The Cytoplasmic segment spans residues 118-139; the sequence is QRYMGICHPLASWHKKKGKKLT. The chain crosses the membrane as a helical span at residues 140 to 160; sequence WLVCAAVWFIVIAQCLPTFVF. Residues 161 to 189 are Extracellular-facing; sequence ASTGTQRNRTVCYDLSPPDRSTSYFPYGI. The helical transmembrane segment at 190 to 210 threads the bilayer; that stretch reads TLTITGFLLPFAAILACYCSM. Residues 211–231 are Cytoplasmic-facing; it reads ARILCQKDELIGLAVHKKKDK. The chain crosses the membrane as a helical span at residues 232 to 252; that stretch reads AVRMIIIVVIVFSISFFPFHL. The Extracellular segment spans residues 253-275; that stretch reads TKTIYLIVRSSASLPCPTLQAFA. The helical transmembrane segment at 276–298 threads the bilayer; it reads IAYKCTRPFASMNSVLDPILFYF. Residues 299–323 lie on the Cytoplasmic side of the membrane; it reads TQRKFRESTRYLLDKMSSKWRQDHC.

Belongs to the G-protein coupled receptor 1 family.

Its subcellular location is the cell membrane. Its function is as follows. Receptor for extracellular ADP &gt; UTP &gt; ATP = UDP. The activity of this receptor is mediated by G proteins which activate a phosphatidylinositol-calcium second messenger system. The sequence is that of P2Y purinoceptor 3 (P2RY3) from Gallus gallus (Chicken).